Reading from the N-terminus, the 158-residue chain is MSHFYDLAPKDKDGNPFPFSNLKGKVVLVVNTASKCGFTPQYKGLEALYQKYKDRGFIILGFPCNQFGNQEPGSDEEIAQFCQKNYGVTFPVLAKINVNGDNVDPVYQFLKSQKKQLGLERIKWNFEKFLVNRQGQVIERYSSISKPEHLENDIESVL.

Catalysis depends on Cys-36, which acts as the Cysteine sulfenic acid (-SOH) intermediate. Cys-36 and Cys-82 are disulfide-bonded.

It belongs to the glutathione peroxidase family. Monomer.

It localises to the cytoplasm. It is found in the mitochondrion. It catalyses the reaction a hydroperoxide + [thioredoxin]-dithiol = an alcohol + [thioredoxin]-disulfide + H2O. In terms of biological role, glutathione peroxidase-like protein that protects cells during oxidative stress. Has peroxidase activity reducing hydrogen peroxide, alkyl and phospholipid hydroperoxides using preferentially thioredoxin as a reducing power. May act as a scavenger of H(2)O(2). The chain is Glutathione peroxidase-like peroxiredoxin gpx1 from Schizosaccharomyces pombe (strain 972 / ATCC 24843) (Fission yeast).